Consider the following 104-residue polypeptide: Protein MGF 110-2L (104 aa).

The N-terminal stretch at 1–31 (MRFFSYLGLLLAGLVSLQGFSTDNPLEEELR) is a signal peptide.

It belongs to the asfivirus MGF 110 family.

In terms of biological role, plays a role in virus cell tropism, and may be required for efficient virus replication in macrophages. This African swine fever virus (isolate Warthog/Namibia/Wart80/1980) (ASFV) protein is Protein MGF 110-2L.